Reading from the N-terminus, the 131-residue chain is U-scoloptoxin-Er5e (131 aa).

Residues 1–22 form the signal peptide; sequence MKTNCEFPLLCLLIVLVANVEG. Positions 23–94 are excised as a propeptide; sequence EVEDNELKMV…KRLWRNWERR (72 aa). RLWRNWE repeat units lie at residues 34–40, 61–67, and 86–92; these read RLWRNWE. Glutamine 95 carries the post-translational modification Pyrrolidone carboxylic acid. The stretch at 107 to 113 is one RLWRNWE 4; approximate repeat; that stretch reads ELWRNWE. Positions 112–131 are excised as a propeptide; sequence WEDLKRRQVVDLNDEQKTTG.

Belongs to the scoloptoxin-08 family. Expressed by the venom gland.

It localises to the secreted. This chain is U-scoloptoxin-Er5e, found in Ethmostigmus rubripes (Giant centipede).